A 275-amino-acid polypeptide reads, in one-letter code: 4-diphosphocytidyl-2-C-methyl-D-erythritol kinase (275 aa).

Lysine 15 is a catalytic residue. An ATP-binding site is contributed by 97-107; the sequence is PMGSGLGGGSS. The active site involves aspartate 137.

This sequence belongs to the GHMP kinase family. IspE subfamily.

It carries out the reaction 4-CDP-2-C-methyl-D-erythritol + ATP = 4-CDP-2-C-methyl-D-erythritol 2-phosphate + ADP + H(+). It participates in isoprenoid biosynthesis; isopentenyl diphosphate biosynthesis via DXP pathway; isopentenyl diphosphate from 1-deoxy-D-xylulose 5-phosphate: step 3/6. Catalyzes the phosphorylation of the position 2 hydroxy group of 4-diphosphocytidyl-2C-methyl-D-erythritol. The chain is 4-diphosphocytidyl-2-C-methyl-D-erythritol kinase from Pseudothermotoga lettingae (strain ATCC BAA-301 / DSM 14385 / NBRC 107922 / TMO) (Thermotoga lettingae).